Reading from the N-terminus, the 858-residue chain is Respiratory burst oxidase homolog protein D (858 aa).

Residues Met-1–Leu-13 are compositionally biased toward basic and acidic residues. The segment at Met-1–Asn-27 is disordered. Residues Met-1–Arg-318 lie on the Cytoplasmic side of the membrane. EF-hand-like stretches follow at residues Thr-134–Ala-144 and Arg-171–Gln-182. 2 consecutive EF-hand domains span residues Ser-194–Ala-229 and Gln-238–Gln-273. Ca(2+) is bound by residues Asp-207, Asp-209, Asp-211, Arg-213, and Glu-218. Residues Val-319–Gln-339 form a helical membrane-spanning segment. The Extracellular segment spans residues Tyr-340–His-351. Residues Cys-352 to Leu-372 form a helical membrane-spanning segment. In terms of domain architecture, Ferric oxidoreductase spans Lys-357 to Ile-514. At Pro-373–Asn-397 the chain is on the cytoplasmic side. A helical membrane pass occupies residues Ile-398–Ala-418. Residues His-419–Lys-454 are Extracellular-facing. The helical transmembrane segment at Gly-455–Ala-475 threads the bilayer. Residues Ser-476 to Asn-497 lie on the Cytoplasmic side of the membrane. Residues Ala-498–Ile-518 form a helical membrane-spanning segment. Topologically, residues Glu-519–Glu-675 are extracellular. Positions Leu-548–Asp-670 constitute an FAD-binding FR-type domain. A helical membrane pass occupies residues Val-676–Ile-696. Residues Val-697–Phe-858 lie on the Cytoplasmic side of the membrane.

It belongs to the RBOH (TC 5.B.1.3) family. In terms of assembly, monomer and homodimer. Phosphorylated by CPK. Expressed in leaves.

It is found in the membrane. Its function is as follows. Calcium-dependent NADPH oxidase that generates superoxide. May be responsible for the oxidative burst in response to pathogen attack in the leaves. The sequence is that of Respiratory burst oxidase homolog protein D (RBOHD) from Solanum tuberosum (Potato).